A 224-amino-acid polypeptide reads, in one-letter code: Protein DEHYDRATION-INDUCED 19 homolog 4 (224 aa).

Polar residues predominate over residues 1–12 (MDSNWINCPSVF). The tract at residues 1-23 (MDSNWINCPSVFSSSSSSSRRCQ) is disordered. The span at 13–23 (SSSSSSSRRCQ) shows a compositional bias: low complexity. T117 is subject to Phosphothreonine.

It belongs to the Di19 family. In terms of processing, phosphorylated in vitro by CPK3 or CPK11. As to expression, expressed in seedlings, roots, leaves, stems, flowers and siliques.

The protein resides in the cytoplasm. Its subcellular location is the perinuclear region. The chain is Protein DEHYDRATION-INDUCED 19 homolog 4 (DI19-4) from Arabidopsis thaliana (Mouse-ear cress).